The following is a 581-amino-acid chain: ATP-dependent RNA helicase DBP3 (581 aa).

Positions 1-118 (MAATKHSLAD…ASSNSEAPSS (118 aa)) are disordered. Basic and acidic residues-rich tracts occupy residues 7-35 (SLAD…EKRE) and 53-62 (DADRAAEKER). A compositionally biased stretch (basic residues) spans 63–73 (KKAKKAKKLEK). 2 stretches are compositionally biased toward low complexity: residues 80-89 (AEASAEPAAE) and 106-118 (TTEA…APSS). A Q motif motif is present at residues 160 to 189 (LEFHQLPATNLLEKKPSPFANYKAPTPIQS). Positions 192 to 365 (WPFTLSGRDV…ATFMVSPVKI (174 aa)) constitute a Helicase ATP-binding domain. 205-212 (AETGSGKT) serves as a coordination point for ATP. The DEAD box motif lies at 311–314 (DEAD). Residues 402–551 (RLLEVLKEHQ…PVPEDLLKFG (150 aa)) enclose the Helicase C-terminal domain.

Belongs to the DEAD box helicase family. DDX5/DBP2 subfamily.

It is found in the nucleus. The protein localises to the nucleolus. It carries out the reaction ATP + H2O = ADP + phosphate + H(+). Its function is as follows. ATP-dependent RNA helicase required for 60S ribosomal subunit synthesis. Involved in efficient pre-rRNA processing, predominantly at site A3, which is necessary for the normal formation of 25S and 5.8S rRNAs. In Gibberella zeae (strain ATCC MYA-4620 / CBS 123657 / FGSC 9075 / NRRL 31084 / PH-1) (Wheat head blight fungus), this protein is ATP-dependent RNA helicase DBP3 (DBP3).